Here is a 354-residue protein sequence, read N- to C-terminus: Methionine import ATP-binding protein MetN (354 aa).

An ABC transporter domain is found at 8-250; sequence LDHIDITFRQ…PKEALTQEFI (243 aa). Residue 42 to 49 coordinates ATP; sequence GYSGAGKS.

Belongs to the ABC transporter superfamily. Methionine importer (TC 3.A.1.24) family. In terms of assembly, the complex is composed of two ATP-binding proteins (MetN), two transmembrane proteins (MetI) and a solute-binding protein (MetQ).

It localises to the cell membrane. The enzyme catalyses L-methionine(out) + ATP + H2O = L-methionine(in) + ADP + phosphate + H(+). It carries out the reaction D-methionine(out) + ATP + H2O = D-methionine(in) + ADP + phosphate + H(+). Functionally, part of the ABC transporter complex MetNIQ involved in methionine import. Responsible for energy coupling to the transport system. This Streptococcus pyogenes serotype M2 (strain MGAS10270) protein is Methionine import ATP-binding protein MetN.